A 463-amino-acid chain; its full sequence is Asparagine--tRNA ligase (463 aa).

This sequence belongs to the class-II aminoacyl-tRNA synthetase family. Homodimer.

The protein localises to the cytoplasm. It catalyses the reaction tRNA(Asn) + L-asparagine + ATP = L-asparaginyl-tRNA(Asn) + AMP + diphosphate + H(+). This is Asparagine--tRNA ligase from Clostridium novyi (strain NT).